Consider the following 130-residue polypeptide: Small ribosomal subunit protein bS6 (130 aa).

The segment at 96-130 is disordered; sequence VTEASPMAKARDERDSRRSPSDDRIEEESAEENAE. The segment covering 104–118 has biased composition (basic and acidic residues); the sequence is KARDERDSRRSPSDD. A compositionally biased stretch (acidic residues) spans 119-130; the sequence is RIEEESAEENAE.

This sequence belongs to the bacterial ribosomal protein bS6 family.

Its function is as follows. Binds together with bS18 to 16S ribosomal RNA. The protein is Small ribosomal subunit protein bS6 of Shewanella denitrificans (strain OS217 / ATCC BAA-1090 / DSM 15013).